The chain runs to 385 residues: S-adenosylmethionine synthase (385 aa).

His-16 serves as a coordination point for ATP. Residue Asp-18 coordinates Mg(2+). Glu-44 lines the K(+) pocket. L-methionine is bound by residues Glu-57 and Gln-100. Positions 100 to 110 (QSPDINQGVDR) are flexible loop. Residues 164 to 166 (DGK), 230 to 231 (KF), Asp-239, 245 to 246 (RK), Ala-262, and Lys-266 contribute to the ATP site. Position 239 (Asp-239) interacts with L-methionine. Lys-270 contributes to the L-methionine binding site.

It belongs to the AdoMet synthase family. In terms of assembly, homotetramer; dimer of dimers. The cofactor is Mg(2+). Requires K(+) as cofactor.

The protein localises to the cytoplasm. It catalyses the reaction L-methionine + ATP + H2O = S-adenosyl-L-methionine + phosphate + diphosphate. It participates in amino-acid biosynthesis; S-adenosyl-L-methionine biosynthesis; S-adenosyl-L-methionine from L-methionine: step 1/1. Its function is as follows. Catalyzes the formation of S-adenosylmethionine (AdoMet) from methionine and ATP. The overall synthetic reaction is composed of two sequential steps, AdoMet formation and the subsequent tripolyphosphate hydrolysis which occurs prior to release of AdoMet from the enzyme. This chain is S-adenosylmethionine synthase, found in Helicobacter pylori (strain G27).